A 306-amino-acid chain; its full sequence is Ribonuclease Z (306 aa).

Zn(2+)-binding residues include H63, H65, D67, H68, H140, D211, and H269. The Proton acceptor role is filled by D67.

The protein belongs to the RNase Z family. Homodimer. It depends on Zn(2+) as a cofactor.

The enzyme catalyses Endonucleolytic cleavage of RNA, removing extra 3' nucleotides from tRNA precursor, generating 3' termini of tRNAs. A 3'-hydroxy group is left at the tRNA terminus and a 5'-phosphoryl group is left at the trailer molecule.. Functionally, zinc phosphodiesterase, which displays some tRNA 3'-processing endonuclease activity. Probably involved in tRNA maturation, by removing a 3'-trailer from precursor tRNA. This Listeria monocytogenes serotype 4b (strain CLIP80459) protein is Ribonuclease Z.